The primary structure comprises 209 residues: Small ribosomal subunit protein uS4 (209 aa).

Residues 99–179 enclose the S4 RNA-binding domain; that stretch reads GRLDSVAYRM…FPEWIEVDAK (81 aa).

This sequence belongs to the universal ribosomal protein uS4 family. As to quaternary structure, part of the 30S ribosomal subunit. Contacts protein S5. The interaction surface between S4 and S5 is involved in control of translational fidelity.

Functionally, one of the primary rRNA binding proteins, it binds directly to 16S rRNA where it nucleates assembly of the body of the 30S subunit. Its function is as follows. With S5 and S12 plays an important role in translational accuracy. In Azoarcus sp. (strain BH72), this protein is Small ribosomal subunit protein uS4.